A 341-amino-acid polypeptide reads, in one-letter code: AB hydrolase superfamily protein C1039.03 (341 aa).

The protein belongs to the AB hydrolase superfamily.

Its subcellular location is the cytoplasm. It localises to the nucleus. This is AB hydrolase superfamily protein C1039.03 from Schizosaccharomyces pombe (strain 972 / ATCC 24843) (Fission yeast).